The primary structure comprises 338 residues: Anthranilate phosphoribosyltransferase (338 aa).

5-phospho-alpha-D-ribose 1-diphosphate contacts are provided by residues Gly-78, Gly-81–Asp-82, Thr-86, Asn-88–Thr-91, Lys-106–Ser-114, and Ser-118. Gly-78 lines the anthranilate pocket. Position 90 (Ser-90) interacts with Mg(2+). Asn-109 is an anthranilate binding site. An anthranilate-binding site is contributed by Arg-164. Asp-223 and Glu-224 together coordinate Mg(2+).

This sequence belongs to the anthranilate phosphoribosyltransferase family. As to quaternary structure, homodimer. It depends on Mg(2+) as a cofactor.

It carries out the reaction N-(5-phospho-beta-D-ribosyl)anthranilate + diphosphate = 5-phospho-alpha-D-ribose 1-diphosphate + anthranilate. It participates in amino-acid biosynthesis; L-tryptophan biosynthesis; L-tryptophan from chorismate: step 2/5. Catalyzes the transfer of the phosphoribosyl group of 5-phosphorylribose-1-pyrophosphate (PRPP) to anthranilate to yield N-(5'-phosphoribosyl)-anthranilate (PRA). The sequence is that of Anthranilate phosphoribosyltransferase from Bacillus subtilis (strain 168).